The following is a 1342-amino-acid chain: DNA-directed RNA polymerase subunit beta (1342 aa).

The protein belongs to the RNA polymerase beta chain family. The RNAP catalytic core consists of 2 alpha, 1 beta, 1 beta' and 1 omega subunit. When a sigma factor is associated with the core the holoenzyme is formed, which can initiate transcription.

It carries out the reaction RNA(n) + a ribonucleoside 5'-triphosphate = RNA(n+1) + diphosphate. Functionally, DNA-dependent RNA polymerase catalyzes the transcription of DNA into RNA using the four ribonucleoside triphosphates as substrates. The protein is DNA-directed RNA polymerase subunit beta of Photorhabdus laumondii subsp. laumondii (strain DSM 15139 / CIP 105565 / TT01) (Photorhabdus luminescens subsp. laumondii).